Here is a 434-residue protein sequence, read N- to C-terminus: Perilipin-3 (434 aa).

Residues 1 to 22 are disordered; that stretch reads MSADGAEADGSTQVTVEEPVQQ. At serine 2 the chain carries N-acetylserine. Residue serine 31 is modified to Phosphoserine. At lysine 65 the chain carries N6-acetyllysine. At serine 91 the chain carries Phosphoserine. Residue lysine 122 forms a Glycyl lysine isopeptide (Lys-Gly) (interchain with G-Cter in SUMO1) linkage. Phosphoserine is present on residues serine 130 and serine 148. Residue threonine 170 is modified to Phosphothreonine. Phosphoserine is present on residues serine 175 and serine 179. A Phosphothreonine modification is found at threonine 216. Serine 217 and serine 241 each carry phosphoserine. Position 251 is a phosphotyrosine (tyrosine 251). Coiled-coil stretches lie at residues 252 to 280 and 353 to 377; these read EHSL…SLME and TNVK…SSIH.

Belongs to the perilipin family. In terms of assembly, homooligomer. Interacts with M6PR (via the cytoplasmic domain). Interacts with IGF2R (via the cytoplasmic domain). Post-translationally, phosphorylation at Tyr-251 by isoform 1 of CHKA (CHKalpha2) promotes dissociation from lipid droplets: dissociation is followed by recruitment of autophagosome machinery to lipid droplets and subsequent lipid droplet lipolysis.

The protein resides in the lipid droplet. Its subcellular location is the endosome membrane. The protein localises to the cytoplasm. Structural component of lipid droplets, which is required for the formation and maintenance of lipid storage droplets. Required for the transport of mannose 6-phosphate receptors (MPR) from endosomes to the trans-Golgi network. The chain is Perilipin-3 (PLIN3) from Pongo abelii (Sumatran orangutan).